The sequence spans 133 residues: Putative pre-16S rRNA nuclease (133 aa).

This sequence belongs to the YqgF nuclease family.

Its subcellular location is the cytoplasm. In terms of biological role, could be a nuclease involved in processing of the 5'-end of pre-16S rRNA. The polypeptide is Putative pre-16S rRNA nuclease (Alcanivorax borkumensis (strain ATCC 700651 / DSM 11573 / NCIMB 13689 / SK2)).